A 1087-amino-acid polypeptide reads, in one-letter code: Alpha-mannosidase G (1087 aa).

Zn(2+) is bound by residues H264, D266, D376, and H579. The active-site Nucleophile is D376.

It belongs to the glycosyl hydrolase 38 family. Zn(2+) serves as cofactor.

The catalysed reaction is Hydrolysis of terminal, non-reducing alpha-D-mannose residues in alpha-D-mannosides.. This Dictyostelium discoideum (Social amoeba) protein is Alpha-mannosidase G (manG).